The primary structure comprises 857 residues: Dynein regulatory complex protein 11 (857 aa).

One can recognise an IQ domain in the interval 206–235 (TKLAALQIQKVWRGFHQCKKTVKEREEEMV). Residues 348–388 (EEKLKKKKKKEDKENKGKKGKKEKKEKKEKKVSLKEKAMKD) form a disordered region. The segment covering 365–375 (KKGKKEKKEKK) has biased composition (basic residues). The segment covering 376–387 (EKKVSLKEKAMK) has biased composition (basic and acidic residues). ATP is bound at residue 598–605 (GPSGVGKK). The segment at 834 to 857 (SLTVGNKEKEKDKGKKGKRGKKKK) is disordered. The segment covering 847 to 857 (GKKGKRGKKKK) has biased composition (basic residues).

Belongs to the AAA ATPase family. DRC11 subfamily. Component of the nexin-dynein regulatory complex (N-DRC).

It localises to the cytoplasm. Its subcellular location is the cytoskeleton. The protein localises to the flagellum axoneme. Its function is as follows. Component of the nexin-dynein regulatory complex (N-DRC), a key regulator of ciliary/flagellar motility which maintains the alignment and integrity of the distal axoneme and regulates microtubule sliding in motile axonemes. This chain is Dynein regulatory complex protein 11 (Iqca1), found in Mus musculus (Mouse).